The chain runs to 435 residues: Adenylosuccinate synthetase (435 aa).

GTP contacts are provided by residues 17-23 (GDEGKGK) and 45-47 (GHT). Asp18 acts as the Proton acceptor in catalysis. Residues Asp18 and Gly45 each contribute to the Mg(2+) site. IMP is bound by residues 18–21 (DEGK), 43–46 (NAGH), Thr134, Arg148, Gln229, Thr244, and Arg308. The active-site Proton donor is the His46. Position 304 to 310 (304 to 310 (SVTGRPR)) interacts with substrate. GTP contacts are provided by residues Arg310, 336-338 (KLD), and 418-420 (STG).

The protein belongs to the adenylosuccinate synthetase family. As to quaternary structure, homodimer. The cofactor is Mg(2+).

The protein resides in the cytoplasm. It catalyses the reaction IMP + L-aspartate + GTP = N(6)-(1,2-dicarboxyethyl)-AMP + GDP + phosphate + 2 H(+). It participates in purine metabolism; AMP biosynthesis via de novo pathway; AMP from IMP: step 1/2. Functionally, plays an important role in the de novo pathway of purine nucleotide biosynthesis. Catalyzes the first committed step in the biosynthesis of AMP from IMP. This chain is Adenylosuccinate synthetase, found in Bordetella parapertussis (strain 12822 / ATCC BAA-587 / NCTC 13253).